The sequence spans 372 residues: NAD(P)H-quinone oxidoreductase subunit 1 (372 aa).

A run of 8 helical transmembrane segments spans residues 31–51, 65–85, 97–117, 128–148, 176–196, 254–276, 304–324, and 347–367; these read PLPM…VVWL, PEFI…KLVL, LLFT…YLIL, VGLG…GLLM, LALS…VDIV, FALF…AVLY, LIFA…LIFL, and FLLP…LAFP.

This sequence belongs to the complex I subunit 1 family. In terms of assembly, NDH-1 is composed of at least 11 different subunits.

The protein localises to the cellular thylakoid membrane. It carries out the reaction a plastoquinone + NADH + (n+1) H(+)(in) = a plastoquinol + NAD(+) + n H(+)(out). It catalyses the reaction a plastoquinone + NADPH + (n+1) H(+)(in) = a plastoquinol + NADP(+) + n H(+)(out). Functionally, NDH-1 shuttles electrons from an unknown electron donor, via FMN and iron-sulfur (Fe-S) centers, to quinones in the respiratory and/or the photosynthetic chain. The immediate electron acceptor for the enzyme in this species is believed to be plastoquinone. Couples the redox reaction to proton translocation, and thus conserves the redox energy in a proton gradient. This is NAD(P)H-quinone oxidoreductase subunit 1 from Leptolyngbya boryana (Plectonema boryanum).